The following is a 126-amino-acid chain: Fluoride-specific ion channel FluC (126 aa).

The next 4 membrane-spanning stretches (helical) occupy residues Phe5 to Ile25, Thr39 to Val59, Ile69 to Thr89, and Ala103 to Val123. Gly77 and Thr80 together coordinate Na(+).

Belongs to the fluoride channel Fluc/FEX (TC 1.A.43) family.

It is found in the cell inner membrane. It catalyses the reaction fluoride(in) = fluoride(out). Na(+) is not transported, but it plays an essential structural role and its presence is essential for fluoride channel function. Its function is as follows. Fluoride-specific ion channel. Important for reducing fluoride concentration in the cell, thus reducing its toxicity. The sequence is that of Fluoride-specific ion channel FluC from Nitrobacter winogradskyi (strain ATCC 25391 / DSM 10237 / CIP 104748 / NCIMB 11846 / Nb-255).